Reading from the N-terminus, the 1199-residue chain is DNA-directed RNA polymerase subunit beta' (1199 aa).

4 residues coordinate Zn(2+): cysteine 60, cysteine 62, cysteine 75, and cysteine 78. Mg(2+) is bound by residues aspartate 449, aspartate 451, and aspartate 453. Zn(2+)-binding residues include cysteine 818, cysteine 892, cysteine 899, and cysteine 902.

Belongs to the RNA polymerase beta' chain family. The RNAP catalytic core consists of 2 alpha, 1 beta, 1 beta' and 1 omega subunit. When a sigma factor is associated with the core the holoenzyme is formed, which can initiate transcription. Mg(2+) is required as a cofactor. It depends on Zn(2+) as a cofactor.

It catalyses the reaction RNA(n) + a ribonucleoside 5'-triphosphate = RNA(n+1) + diphosphate. Functionally, DNA-dependent RNA polymerase catalyzes the transcription of DNA into RNA using the four ribonucleoside triphosphates as substrates. This chain is DNA-directed RNA polymerase subunit beta', found in Bacillus pumilus (strain SAFR-032).